A 76-amino-acid polypeptide reads, in one-letter code: Protein CYSTEINE-RICH TRANSMEMBRANE MODULE 11 (76 aa).

Residues 19–45 are disordered; that stretch reads GPPPPVGVPPQYYPPPPPPPPPPPPPR. Residues 47–63 traverse the membrane as a helical segment; that stretch reads VGFLEGLLAALCCCCLV.

It belongs to the CYSTM1 family. As to quaternary structure, heterodimers. Interacts with CYSTM6, CYSTM7 and WIH1/CYSTM13. Mostly expressed in stems, siliques, leaves and flowers and, to a lower extent, in roots.

The protein localises to the cell membrane. It localises to the cytoplasm. Its function is as follows. Involved in resistance to abiotic stress. The protein is Protein CYSTEINE-RICH TRANSMEMBRANE MODULE 11 of Arabidopsis thaliana (Mouse-ear cress).